A 399-amino-acid polypeptide reads, in one-letter code: Glutathione S-transferase LANCL1 (399 aa).

At Ala-2 the chain carries N-acetylalanine. Lys-142 carries the post-translational modification N6-acetyllysine. Cys-276 is a binding site for Zn(2+). Lys-317 is a glutathione binding site. Positions 322 and 323 each coordinate Zn(2+). Residue 364–367 (RTPD) participates in glutathione binding.

The protein belongs to the LanC-like protein family. Interacts with the C-terminal of STOM. Interacts with the EPS8 SH3 domain. Interaction with EPS8 is inhibited by glutathione binding. In terms of tissue distribution, expressed in brain.

It localises to the cytoplasm. The protein resides in the cell membrane. It catalyses the reaction RX + glutathione = an S-substituted glutathione + a halide anion + H(+). The catalysed reaction is 1-chloro-2,4-dinitrobenzene + glutathione = 2,4-dinitrophenyl-S-glutathione + chloride + H(+). Functionally, functions as a glutathione transferase. Catalyzes conjugation of the glutathione (GSH) to artificial substrates 1-chloro-2,4-dinitrobenzene (CDNB) and p-nitrophenyl acetate. Mitigates neuronal oxidative stress during normal postnatal development and in response to oxidative stresses probably through GSH antioxidant defense mechanism. May play a role in EPS8 signaling. Binds glutathione. The polypeptide is Glutathione S-transferase LANCL1 (LANCL1) (Bos taurus (Bovine)).